We begin with the raw amino-acid sequence, 252 residues long: Phosphoglycolate phosphatase (252 aa).

Aspartate 13 (nucleophile) is an active-site residue. The Mg(2+) site is built by aspartate 13, aspartate 15, and aspartate 192.

It belongs to the HAD-like hydrolase superfamily. CbbY/CbbZ/Gph/YieH family. Monomer. Mg(2+) serves as cofactor. Requires chloride as cofactor.

It catalyses the reaction 2-phosphoglycolate + H2O = glycolate + phosphate. Its pathway is organic acid metabolism; glycolate biosynthesis; glycolate from 2-phosphoglycolate: step 1/1. Its function is as follows. Specifically catalyzes the dephosphorylation of 2-phosphoglycolate. Is involved in the dissimilation of the intracellular 2-phosphoglycolate formed during the DNA repair of 3'-phosphoglycolate ends, a major class of DNA lesions induced by oxidative stress. This Shigella flexneri protein is Phosphoglycolate phosphatase.